A 501-amino-acid polypeptide reads, in one-letter code: ATP synthase subunit alpha (501 aa).

169–176 provides a ligand contact to ATP; it reads GDRQTGKT.

The protein belongs to the ATPase alpha/beta chains family. As to quaternary structure, F-type ATPases have 2 components, CF(1) - the catalytic core - and CF(0) - the membrane proton channel. CF(1) has five subunits: alpha(3), beta(3), gamma(1), delta(1), epsilon(1). CF(0) has three main subunits: a(1), b(2) and c(9-12). The alpha and beta chains form an alternating ring which encloses part of the gamma chain. CF(1) is attached to CF(0) by a central stalk formed by the gamma and epsilon chains, while a peripheral stalk is formed by the delta and b chains.

It is found in the cell membrane. The catalysed reaction is ATP + H2O + 4 H(+)(in) = ADP + phosphate + 5 H(+)(out). Produces ATP from ADP in the presence of a proton gradient across the membrane. The alpha chain is a regulatory subunit. The polypeptide is ATP synthase subunit alpha (Streptococcus equi subsp. zooepidemicus (strain H70)).